Here is a 946-residue protein sequence, read N- to C-terminus: MKPLSSPLQQYWQTVVERLPEPLAEESLSAQAKSVLTFSDFVQDSVIAHPEWLTELESQPPQADEWQHYAAWLQEALCNVSDEAGLMRELRLFRRRIMVRIAWAQTLALVTEESILQQLSYLAETLIVAARDWLYDACCREWGTPCNAQGEAQPLLILGMGKLGGGELNFSSDIDLIFAWPEHGCTQGGRRELDNAQFFTRMGQRLIKVLDQPTQDGFVYRVDMRLRPFGESGPLVLSFAALEDYYQEQGRDWERYAMVKARIMGDSEGVYANELRAMLRPFVFRRYIDFSVIQSLRNMKGMIAREVRRRGLTDNIKLGAGGIREIEFIVQVFQLIRGGREPSLQSRSLLPTLSVIAALHLLSENDAEQLRVAYLFLRRLENLLQSINDEQTQTLPSDELNRARLAWAMDFADWPQLTGALTAHMTNVRRVFNELIGDDESETQEESLSEQWRELWQDALQEDDTTPVLAHLSEDDRKQVLTLIADFRKELDKRTIGPRGRQVLDHLMPHLLSDVCAREDAAVTLSRITALLVGIVTRTTYLELLSEFPAALKHLISLCAASPMIASQLARYPLLLDELLDPNTLYQPTATDAYRDELRQYLLRVPEDDEEQQLEALRQFKQAQLLRIAAADIAGTLPVMKVSDHLTWLAEAMIDAVVQQAWVQMVARYGKPNHLNEREGRGFAVVGYGKLGGWELGYSSDLDLIFLHDCPMDAMTDGEREIDGRQFYLRLAQRIMHLFSTRTSSGILYEVDARLRPSGAAGMLVTSAEAFADYQKNEAWTWEHQALVRARVVYGDPQLTAHFDAVRREIMTLPREGKTLQTEVREMREKMRAHLGNKHRDRFDIKADEGGITDIEFITQYLVLRYAHEKPKLTRWSDNVRILELLAQNDIMEEQEAMALTRAYTTLRDELHHLALQELPGHVSEDCFTAERELVRASWQKWLVEE.

An adenylyl removase region spans residues 1 to 440 (MKPLSSPLQQ…VFNELIGDDE (440 aa)). Residues 449-946 (SEQWRELWQD…ASWQKWLVEE (498 aa)) form an adenylyl transferase region.

This sequence belongs to the GlnE family. Mg(2+) is required as a cofactor.

The enzyme catalyses [glutamine synthetase]-O(4)-(5'-adenylyl)-L-tyrosine + phosphate = [glutamine synthetase]-L-tyrosine + ADP. The catalysed reaction is [glutamine synthetase]-L-tyrosine + ATP = [glutamine synthetase]-O(4)-(5'-adenylyl)-L-tyrosine + diphosphate. Its function is as follows. Involved in the regulation of glutamine synthetase GlnA, a key enzyme in the process to assimilate ammonia. When cellular nitrogen levels are high, the C-terminal adenylyl transferase (AT) inactivates GlnA by covalent transfer of an adenylyl group from ATP to specific tyrosine residue of GlnA, thus reducing its activity. Conversely, when nitrogen levels are low, the N-terminal adenylyl removase (AR) activates GlnA by removing the adenylyl group by phosphorolysis, increasing its activity. The regulatory region of GlnE binds the signal transduction protein PII (GlnB) which indicates the nitrogen status of the cell. The polypeptide is Bifunctional glutamine synthetase adenylyltransferase/adenylyl-removing enzyme (Escherichia coli O9:H4 (strain HS)).